A 560-amino-acid polypeptide reads, in one-letter code: MNQRLIIKTALSAAILASLAGCASQPAHEWNADTTYKLTVLHTNDHHGRFWQNKHGEYGMAARKTLIDDLRDEIQAEGGSVLLLSGGDINTGVPESDLQDAEPDFKGMSKIGYDAMALGNHEFDNPLDVLFKQQDWANFPMLSANIYDKKTGKRLFQPYAMFNKQGIKIAVIGLTTEDTAKLGNPEFIGQVDFRDPKVEAKELIAELKKTENPDLIFAVTHMGHYENGNRGINAPGDVALARYLNEGDLDMIVGGHSQEPVCMEGPNVIKKNFKPGDECQPDQQNGTYIVQAHEWGKYVGRADYEFRNGELSMVSYDLIPVNLKKKINVDGQSQRVFVQDEITQDKAMLDFLRPFQEKGQSQLNVKIAESNGKLEGDRDVVRFQQTNLGRLIATAHMERAKADFAVMNSGGVRDSIEAGDITYKDVLTVQPFGNMVSYVDMSGQEVLDYLNIVATKPVDSGAYAQFAGISMRIENDKVTNVFIGNKQLRLDGRYRFTVPSYNASGGDGYPKIDTHPGYVNTGFTDAEVLKDYLESHSPIDVNEYAPSGEVMYQTNNVVNQ.

The first 21 residues, 1 to 21 (MNQRLIIKTALSAAILASLAG), serve as a signal peptide directing secretion. The N-palmitoyl cysteine moiety is linked to residue Cys22. Cys22 carries S-diacylglycerol cysteine lipidation. Residues Asp45, His47, Asp88, Asn120, His221, His256, and Gln258 each contribute to the a divalent metal cation site. Residues Phe432 and 501 to 507 (YNASGGD) contribute to the substrate site.

The protein belongs to the 5'-nucleotidase family. Chloride is required as a cofactor. The cofactor is Mg(2+).

It is found in the cell outer membrane. The enzyme catalyses a ribonucleoside 5'-phosphate + H2O = a ribonucleoside + phosphate. Functionally, degradation of extracellular 5'-nucleotides for nutritional needs. The protein is 5'-nucleotidase (nutA) of Vibrio parahaemolyticus serotype O3:K6 (strain RIMD 2210633).